Consider the following 1097-residue polypeptide: RecBCD enzyme subunit RecC (1097 aa).

It belongs to the RecC family. Heterotrimer of RecB, RecC and RecD. All subunits contribute to DNA-binding.

A helicase/nuclease that prepares dsDNA breaks (DSB) for recombinational DNA repair. Binds to DSBs and unwinds DNA via a highly rapid and processive ATP-dependent bidirectional helicase activity. Holoenzyme degrades any linearized DNA that is unable to undergo homologous recombination. In the holoenzyme this subunit recognizes the wild-type Chi sequence, and when added to isolated RecB increases its ATP-dependent helicase processivity. Unlike the case in E.coli, suppresses RecA-dependent homologous recombination, is instead required for single-strand annealing pathway repair of DSB. The chain is RecBCD enzyme subunit RecC from Mycobacterium tuberculosis (strain CDC 1551 / Oshkosh).